A 307-amino-acid chain; its full sequence is Junctional adhesion molecule 2A (307 aa).

The signal sequence occupies residues 1 to 18 (MLVCVSLLILIHSVPVSP). Residues 19–112 (VTVSSRNPKV…EVSAPSDSIS (94 aa)) form the Ig-like V-type domain. The Extracellular portion of the chain corresponds to 19 to 226 (VTVSSRNPKV…FQTHDLNVAA (208 aa)). 2 disulfide bridges follow: cysteine 40-cysteine 102 and cysteine 147-cysteine 197. One can recognise an Ig-like C2-type domain in the interval 126 to 225 (PQTPSCDVPS…TFQTHDLNVA (100 aa)). Residues 227–247 (VVSAVVLVCVILFLCAFGVCL) form a helical membrane-spanning segment. Residues 248–307 (AHRQGYFSRHRGRSFWIPHCHGVTHISSQNLNPSEHTQHSGYSHPPKEPQDFKHTQSFML) lie on the Cytoplasmic side of the membrane. Polar residues predominate over residues 278-288 (LNPSEHTQHSG). Residues 278–307 (LNPSEHTQHSGYSHPPKEPQDFKHTQSFML) form a disordered region. The span at 292 to 301 (PPKEPQDFKH) shows a compositional bias: basic and acidic residues.

The protein belongs to the immunoglobulin superfamily.

It is found in the cell membrane. It localises to the cell junction. The protein resides in the tight junction. Its function is as follows. Junctional adhesion protein that mediates heterotypic cell-cell interactions to regulate different cellular processes. During myogenesis, it is involved in myocyte fusion through the binding of jam3b on neighboring myocytes. The polypeptide is Junctional adhesion molecule 2A (jam2a) (Danio rerio (Zebrafish)).